The sequence spans 186 residues: Transcription factor pgmR (186 aa).

Residues 19–46 (CDECGAAKLKCDRGHPSCGRCISLGLKC) constitute a DNA-binding region (zn(2)-C6 fungal-type). Residues 52–98 (RKAGKPRRDAQSATRPPPTPGDSGPPLDYNSFGPTSPPSSVGDGATL) are disordered.

It localises to the nucleus. Its function is as follows. Transcription factor that specifically regulates the expression of the pgm gene cluster that mediates the biosynthesis of cryptic naphthoquinones derived pigments responsible for the coloration of the fruiting bodies. This is Transcription factor pgmR from Aspergillus terreus (strain NIH 2624 / FGSC A1156).